The primary structure comprises 335 residues: Glycerol-3-phosphate dehydrogenase [NAD(P)+] (335 aa).

3 residues coordinate NADPH: W15, R36, and K109. Residues K109, G137, and S139 each coordinate sn-glycerol 3-phosphate. Position 141 (A141) interacts with NADPH. K192, D245, S255, R256, and N257 together coordinate sn-glycerol 3-phosphate. Catalysis depends on K192, which acts as the Proton acceptor. R256 serves as a coordination point for NADPH. NADPH-binding residues include L279 and E281.

It belongs to the NAD-dependent glycerol-3-phosphate dehydrogenase family.

Its subcellular location is the cytoplasm. It carries out the reaction sn-glycerol 3-phosphate + NAD(+) = dihydroxyacetone phosphate + NADH + H(+). The enzyme catalyses sn-glycerol 3-phosphate + NADP(+) = dihydroxyacetone phosphate + NADPH + H(+). The protein operates within membrane lipid metabolism; glycerophospholipid metabolism. Its function is as follows. Catalyzes the reduction of the glycolytic intermediate dihydroxyacetone phosphate (DHAP) to sn-glycerol 3-phosphate (G3P), the key precursor for phospholipid synthesis. The protein is Glycerol-3-phosphate dehydrogenase [NAD(P)+] of Beijerinckia indica subsp. indica (strain ATCC 9039 / DSM 1715 / NCIMB 8712).